The sequence spans 260 residues: Putative serine protease 45 (260 aa).

Residues 1 to 234 (MTRHWPWEVS…YTKWIKKQMS (234 aa)) enclose the Peptidase S1 domain. A disulfide bridge connects residues C19 and C35. H34 functions as the Charge relay system in the catalytic mechanism. A glycan (N-linked (GlcNAc...) asparagine) is linked at N55. The active-site Charge relay system is the D82. 3 cysteine pairs are disulfide-bonded: C116-C192, C151-C173, and C182-C210. Residue S186 is the Charge relay system of the active site.

It belongs to the peptidase S1 family.

The chain is Putative serine protease 45 from Homo sapiens (Human).